The primary structure comprises 300 residues: MALWLPGGQLTLLLLLWVQQTPAGSTEAPLKVDVDLTPDSFDDQYQGCSEQMVEELNQGDYFIKEVDTHKYYSRAWQKAHLTWLNQAKALPESMTPVHAVAIVVFTLNLNVSSDLAKAMARAAGSPGQYSQSFHFKYLHYYLTSAIQLLRKDSSTKNGSLCYKVYHGMKDVSIGANVGSTIRFGQFLSASLLKEETRVSGNQTLFTIFTCLGASVQDFSLRKEVLIPPYELFEVVSKSGSPKGDLINLRSAGNMSTYNCQLLKACSKKCAPAPVVIGCLFLVTVVISSKSRAQRNLLAPF.

A signal peptide spans 1–23 (MALWLPGGQLTLLLLLWVQQTPA). Residues 24-269 (GSTEAPLKVD…QLLKACSKKC (246 aa)) are Extracellular-facing. 2 disulfide bridges follow: cysteine 48–cysteine 259 and cysteine 161–cysteine 210. Residues 70-255 (KYYSRAWQKA…INLRSAGNMS (186 aa)) form the TR mART core domain. 2 N-linked (GlcNAc...) asparagine glycosylation sites follow: asparagine 110 and asparagine 157. Residue glutamine 185 participates in NAD(+) binding. Residue asparagine 201 is glycosylated (N-linked (GlcNAc...) asparagine). Residue serine 219 participates in NAD(+) binding. Asparagine 253 is a glycosylation site (N-linked (GlcNAc...) asparagine). The GPI-anchor amidated alanine moiety is linked to residue alanine 264. Positions 265–300 (CSKKCAPAPVVIGCLFLVTVVISSKSRAQRNLLAPF) are cleaved as a propeptide — removed in mature form. A helical membrane pass occupies residues 270-286 (APAPVVIGCLFLVTVVI). Residues 287 to 300 (SSKSRAQRNLLAPF) lie on the Cytoplasmic side of the membrane.

It belongs to the Arg-specific ADP-ribosyltransferase family.

It localises to the membrane. The protein resides in the cell membrane. The catalysed reaction is L-arginyl-[protein] + NAD(+) = N(omega)-(ADP-D-ribosyl)-L-arginyl-[protein] + nicotinamide + H(+). The protein is Ecto-ADP-ribosyltransferase 4 (Art4) of Mus musculus (Mouse).